A 313-amino-acid chain; its full sequence is Malate dehydrogenase (313 aa).

11–16 (GAGHTG) contributes to the NAD(+) binding site. Substrate-binding residues include R86 and R92. NAD(+)-binding positions include N99 and 122 to 124 (LTN). Substrate-binding residues include N124 and R155. The active-site Proton acceptor is H179.

This sequence belongs to the LDH/MDH superfamily. MDH type 3 family.

It catalyses the reaction (S)-malate + NAD(+) = oxaloacetate + NADH + H(+). Its function is as follows. Catalyzes the reversible oxidation of malate to oxaloacetate. The protein is Malate dehydrogenase of Staphylococcus epidermidis (strain ATCC 35984 / DSM 28319 / BCRC 17069 / CCUG 31568 / BM 3577 / RP62A).